The following is a 313-amino-acid chain: Calcyphosin-2 (313 aa).

3 EF-hand domains span residues 144-179 (RILTGLGKYFQQLDKEGNGLLDKADFKQALKVFHLE), 180-215 (VSEKDFESAWLILDDNGNGKVDYGEFKRGIIGEMNE), and 216-251 (YRKSYVRKAFMKLDFNKTGSVPITNIRKCYCAKKHS). Residues D193, N195, N197, K199, and E204 each contribute to the Ca(2+) site.

This chain is Calcyphosin-2 (CAPS2), found in Macaca fascicularis (Crab-eating macaque).